Consider the following 127-residue polypeptide: uncharacterized protein (127 aa).

Belongs to the transcriptional regulatory CopG/NikR family.

This is an uncharacterized protein from Methanocaldococcus jannaschii (strain ATCC 43067 / DSM 2661 / JAL-1 / JCM 10045 / NBRC 100440) (Methanococcus jannaschii).